Reading from the N-terminus, the 330-residue chain is MKTAYIAKQRQISFVKSHFSRQLEERLGLIEVQAPILSRVGDGTQDNLSGCEKAVQVKVKALPDAQFEVVHSLAKWKRQTLGQHDFSAGEGLYTHMKALRPDEDRLSPLHSVYVDQWDWERVMGDGERQFSTLKSTVEAIWAGIKATEAEVHKQFGLAPFLPDQIHFVHSQELLARFPDLDAKGRERAIAKELGAVFLVGIGGKLSDGRRHDVRAPDYDDWSSASELGYAGLNGDILVWNPVLEDAFELSSMGIRVDADTLMRQLALTGDEDRLQLEWHQALLRGEMPQTIGGGIGQSRLTMLLLQLPHIGQVQCGVWPAQVRESIPAIL.

It belongs to the class-II aminoacyl-tRNA synthetase family. AsnA subfamily. Homodimer.

It is found in the cytoplasm. The catalysed reaction is L-aspartate + NH4(+) + ATP = L-asparagine + AMP + diphosphate + H(+). The protein operates within amino-acid biosynthesis; L-asparagine biosynthesis; L-asparagine from L-aspartate (ammonia route): step 1/1. The polypeptide is Aspartate--ammonia ligase (Salmonella typhi).